A 586-amino-acid chain; its full sequence is Aspartate--tRNA(Asp/Asn) ligase (586 aa).

Position 176 (Glu-176) interacts with L-aspartate. An aspartate region spans residues 200 to 203; it reads QIFK. Residue Arg-222 participates in L-aspartate binding. Residues 222–224 and Gln-231 contribute to the ATP site; that span reads RDE. His-449 lines the L-aspartate pocket. Glu-483 is an ATP binding site. An L-aspartate-binding site is contributed by Arg-490. 535–538 is an ATP binding site; sequence GIDR.

Belongs to the class-II aminoacyl-tRNA synthetase family. Type 1 subfamily. In terms of assembly, homodimer.

It localises to the cytoplasm. The enzyme catalyses tRNA(Asx) + L-aspartate + ATP = L-aspartyl-tRNA(Asx) + AMP + diphosphate. In terms of biological role, aspartyl-tRNA synthetase with relaxed tRNA specificity since it is able to aspartylate not only its cognate tRNA(Asp) but also tRNA(Asn). Reaction proceeds in two steps: L-aspartate is first activated by ATP to form Asp-AMP and then transferred to the acceptor end of tRNA(Asp/Asn). This Brachyspira hyodysenteriae (strain ATCC 49526 / WA1) protein is Aspartate--tRNA(Asp/Asn) ligase.